The following is a 190-amino-acid chain: Ribose 1,5-bisphosphate phosphokinase PhnN (190 aa).

11-18 (GPSGSGKD) is an ATP binding site.

Belongs to the ribose 1,5-bisphosphokinase family.

It catalyses the reaction alpha-D-ribose 1,5-bisphosphate + ATP = 5-phospho-alpha-D-ribose 1-diphosphate + ADP. It participates in metabolic intermediate biosynthesis; 5-phospho-alpha-D-ribose 1-diphosphate biosynthesis; 5-phospho-alpha-D-ribose 1-diphosphate from D-ribose 5-phosphate (route II): step 3/3. In terms of biological role, catalyzes the phosphorylation of ribose 1,5-bisphosphate to 5-phospho-D-ribosyl alpha-1-diphosphate (PRPP). The polypeptide is Ribose 1,5-bisphosphate phosphokinase PhnN (Thiobacillus denitrificans (strain ATCC 25259 / T1)).